A 230-amino-acid chain; its full sequence is MKDSKELKIMTVDDAVAQIEDNMVLGIGTGSTIELLIPKLAERIHKEQLNITGVCTSNKSAFIAKKLDINVVDINDVGHVDLAIDGADEVDVNINLIKGGGGALFREKVIDEMAHRFVVLADESKLVNYLGESFKLPVEVDKFNWFHIAKKIEAFDDIITERRMSDDVPFITDNGNYILDCQLNKQIDPYQFHEYLIHLTGVLETGYFLNITDQVIVGTQDGVKIINKSN.

Substrate-binding positions include 29-32, 85-88, and 98-101; these read TGST, DGAD, and KGGG. Glu107 acts as the Proton acceptor in catalysis. Position 125 (Lys125) interacts with substrate.

It belongs to the ribose 5-phosphate isomerase family. As to quaternary structure, homodimer.

It catalyses the reaction aldehydo-D-ribose 5-phosphate = D-ribulose 5-phosphate. Its pathway is carbohydrate degradation; pentose phosphate pathway; D-ribose 5-phosphate from D-ribulose 5-phosphate (non-oxidative stage): step 1/1. In terms of biological role, catalyzes the reversible conversion of ribose-5-phosphate to ribulose 5-phosphate. The polypeptide is Ribose-5-phosphate isomerase A (Staphylococcus haemolyticus (strain JCSC1435)).